The sequence spans 308 residues: MAEENHTMKNEFILTGFTDHPELKTLLFVVFFAIYLITVVGNISLVALIFTHRRLHTPMYIFLGNLALVDSCCACAITPKMLENFFSENKRISLYECAVQFYFLCTVETADCFLLAAMAYDRYVAICNPLQYHIMMSKKLCIQMTTGAFIAGNLHSMIHVGLVFRLVFCGSNHINHFYCDILPLYRLSCVDPYINELVLFIFSGSVQVFTIGSVLISYLYILLTIFKMKSKEGRAKAFSTCASHFLSVSLFYGSLFFMYVRPNLLEEGDKDIPAAILFTIVVPLLNPFIYSLRNREVISVLRKILMKK.

Residues 1-25 lie on the Extracellular side of the membrane; that stretch reads MAEENHTMKNEFILTGFTDHPELKT. An N-linked (GlcNAc...) asparagine glycan is attached at Asn5. A helical transmembrane segment spans residues 26–46; that stretch reads LLFVVFFAIYLITVVGNISLV. The Cytoplasmic portion of the chain corresponds to 47–54; the sequence is ALIFTHRR. Residues 55-75 traverse the membrane as a helical segment; the sequence is LHTPMYIFLGNLALVDSCCAC. Residues 76–99 lie on the Extracellular side of the membrane; that stretch reads AITPKMLENFFSENKRISLYECAV. The cysteines at positions 97 and 189 are disulfide-linked. A helical membrane pass occupies residues 100-120; that stretch reads QFYFLCTVETADCFLLAAMAY. At 121–139 the chain is on the cytoplasmic side; that stretch reads DRYVAICNPLQYHIMMSKK. The chain crosses the membrane as a helical span at residues 140 to 160; the sequence is LCIQMTTGAFIAGNLHSMIHV. Residues 161 to 196 are Extracellular-facing; the sequence is GLVFRLVFCGSNHINHFYCDILPLYRLSCVDPYINE. Residues 197-217 form a helical membrane-spanning segment; it reads LVLFIFSGSVQVFTIGSVLIS. At 218 to 237 the chain is on the cytoplasmic side; that stretch reads YLYILLTIFKMKSKEGRAKA. Residues 238 to 258 form a helical membrane-spanning segment; it reads FSTCASHFLSVSLFYGSLFFM. Over 259-271 the chain is Extracellular; the sequence is YVRPNLLEEGDKD. Residues 272 to 292 form a helical membrane-spanning segment; the sequence is IPAAILFTIVVPLLNPFIYSL. Residues 293-308 are Cytoplasmic-facing; the sequence is RNREVISVLRKILMKK.

The protein belongs to the G-protein coupled receptor 1 family.

It is found in the cell membrane. Functionally, odorant receptor. In Homo sapiens (Human), this protein is Olfactory receptor 5K1 (OR5K1).